A 430-amino-acid chain; its full sequence is Protein arginine methyltransferase NDUFAF7, mitochondrial (430 aa).

The transit peptide at 1–31 (MSGLARLRKTAFLMVSASANCRIQRYQSSRT) directs the protein to the mitochondrion.

The protein belongs to the NDUFAF7 family.

Its subcellular location is the mitochondrion. The enzyme catalyses L-arginyl-[protein] + 2 S-adenosyl-L-methionine = N(omega),N(omega)'-dimethyl-L-arginyl-[protein] + 2 S-adenosyl-L-homocysteine + 2 H(+). Arginine methyltransferase involved in the assembly or stability of mitochondrial NADH:ubiquinone oxidoreductase complex (complex I). Acts by mediating symmetric dimethylation of 'Arg-118' of ndufs2 after it assembles into the complex I, stabilizing the early intermediate complex. In Xenopus tropicalis (Western clawed frog), this protein is Protein arginine methyltransferase NDUFAF7, mitochondrial.